A 465-amino-acid chain; its full sequence is tRNA modification GTPase MnmE (465 aa).

(6S)-5-formyl-5,6,7,8-tetrahydrofolate-binding residues include Arg-30, Glu-92, and Arg-132. The TrmE-type G domain occupies 227 to 388 (GLQVALVGRP…LIEAVLKTCG (162 aa)). Asn-237 contributes to the K(+) binding site. GTP is bound by residues 237–242 (NVGKSS), 256–262 (TDLPGTT), 281–284 (DTAG), and 342–345 (NKAD). Ser-241 contacts Mg(2+). Thr-256, Leu-258, and Thr-261 together coordinate K(+). Thr-262 provides a ligand contact to Mg(2+). Residue Lys-465 participates in (6S)-5-formyl-5,6,7,8-tetrahydrofolate binding.

This sequence belongs to the TRAFAC class TrmE-Era-EngA-EngB-Septin-like GTPase superfamily. TrmE GTPase family. As to quaternary structure, homodimer. Heterotetramer of two MnmE and two MnmG subunits. It depends on K(+) as a cofactor.

It is found in the cytoplasm. Functionally, exhibits a very high intrinsic GTPase hydrolysis rate. Involved in the addition of a carboxymethylaminomethyl (cmnm) group at the wobble position (U34) of certain tRNAs, forming tRNA-cmnm(5)s(2)U34. This Prochlorococcus marinus (strain MIT 9303) protein is tRNA modification GTPase MnmE.